Consider the following 281-residue polypeptide: ATP synthase subunit a (281 aa).

7 helical membrane passes run 56 to 76 (KPML…WAAF), 117 to 137 (LVVS…IPVA), 144 to 164 (IIAY…TLTF), 181 to 201 (KSLG…NILI), 215 to 235 (FAGH…LNGV), 237 to 257 (IAYA…ELFI), and 259 to 279 (ALQA…AMAE).

This sequence belongs to the ATPase A chain family. F-type ATPases have 2 components, CF(1) - the catalytic core - and CF(0) - the membrane proton channel. CF(1) has five subunits: alpha(3), beta(3), gamma(1), delta(1), epsilon(1). CF(0) has three main subunits: a(1), b(2) and c(9-12). The alpha and beta chains form an alternating ring which encloses part of the gamma chain. CF(1) is attached to CF(0) by a central stalk formed by the gamma and epsilon chains, while a peripheral stalk is formed by the delta and b chains.

It localises to the cell membrane. Functionally, key component of the proton channel; it plays a direct role in the translocation of protons across the membrane. The chain is ATP synthase subunit a from Streptomyces lividans.